Consider the following 235-residue polypeptide: MSWRGSGRSNFRSRSSSNGGSTFSGGSAGGPPLIVMMGLAFGAGLIMLIVMIASNATAGGFVAATPRPTATPRPTAAPAPTQPPAAQPTTAPATQAANAPGGSNVVNETPAQTVEVRAAPDALAFAQTSLSLPANTVVRLDFVNQNNLGVQHNWVLVNGGDDVAAAVNTAAQNNADALFVPPPDTPNALAWTAMLNAGESGSVTFRTPAPGTYLYICTFPGHYLAGMKGTLTVTP.

Residues 1–21 (MSWRGSGRSNFRSRSSSNGGS) are compositionally biased toward low complexity. Disordered stretches follow at residues 1-27 (MSWR…SGGS) and 64-107 (ATPR…NVVN). A signal peptide spans 1–56 (MSWRGSGRSNFRSRSSSNGGSTFSGGSAGGPPLIVMMGLAFGAGLIMLIVMIASNA). The propeptide occupies 57–80 (TAGGFVAATPRPTATPRPTAAPAP). The span at 69–86 (TATPRPTAAPAPTQPPAA) shows a compositional bias: pro residues. Residues 87-100 (QPTTAPATQAANAP) are compositionally biased toward low complexity. Residues 111–235 (AQTVEVRAAP…GMKGTLTVTP (125 aa)) enclose the Plastocyanin-like domain. Residues His-152, Cys-217, His-222, and Met-227 each contribute to the Cu cation site.

The protein belongs to the multicopper oxidase family. The cofactor is Cu cation. In terms of processing, glycosylated.

The protein localises to the cell membrane. Its function is as follows. Probably a soluble electron acceptor for the integral membrane protein electron transfer alternative complex III (ACIII). The protein is Auracyanin-B of Chloroflexus aurantiacus (strain ATCC 29366 / DSM 635 / J-10-fl).